The chain runs to 39 residues: Natriuretic peptide CnNP-a (39 aa).

The propeptide occupies 1-8 (SGSKTAKI). Cysteines 12 and 28 form a disulfide.

This sequence belongs to the natriuretic peptide family. Expressed by the venom gland.

The protein resides in the secreted. Snake venom natriuretic peptide that targets both NPR1 and NPR2. Exhibits hypotensive and vasodepressor activities. The sequence is that of Natriuretic peptide CnNP-a from Cryptophis nigrescens (Eastern small-eyed snake).